Reading from the N-terminus, the 223-residue chain is Ribonuclease HII (223 aa).

The region spanning 32–223 (FHIAGVDEVG…LKGRFRDNMS (192 aa)) is the RNase H type-2 domain. D38, E39, and D130 together coordinate a divalent metal cation.

The protein belongs to the RNase HII family. It depends on Mn(2+) as a cofactor. Mg(2+) is required as a cofactor.

Its subcellular location is the cytoplasm. It catalyses the reaction Endonucleolytic cleavage to 5'-phosphomonoester.. Functionally, endonuclease that specifically degrades the RNA of RNA-DNA hybrids. The polypeptide is Ribonuclease HII (Bartonella quintana (strain Toulouse) (Rochalimaea quintana)).